The primary structure comprises 642 residues: Putative ATP-binding protein YdiF (642 aa).

2 ABC transporter domains span residues 4-259 (LQVN…EKDL) and 327-541 (LRVQ…ELEK). ATP is bound by residues 36 to 43 (GRNGAGKS) and 360 to 367 (GPNGIGKS). Composition is skewed to basic and acidic residues over residues 541–550 (KMNQQEETDK) and 557–567 (SDSKRSYEEEK). The tract at residues 541 to 567 (KMNQQEETDKTPATVKSDSKRSYEEEK) is disordered.

The protein belongs to the ABC transporter superfamily. ABCF family. YdiF subfamily.

The sequence is that of Putative ATP-binding protein YdiF (ydiF) from Bacillus subtilis (strain 168).